Reading from the N-terminus, the 115-residue chain is uncharacterized protein (115 aa).

Positions 1-29 (MKKAMAILAVLAAAAVICGLLFFHNDVTD) are cleaved as a signal peptide.

This is an uncharacterized protein from Bacillus subtilis (strain 168).